A 433-amino-acid chain; its full sequence is Glutamate-1-semialdehyde 2,1-aminomutase (433 aa).

Residue K271 is modified to N6-(pyridoxal phosphate)lysine.

Belongs to the class-III pyridoxal-phosphate-dependent aminotransferase family. HemL subfamily. As to quaternary structure, homodimer. Pyridoxal 5'-phosphate is required as a cofactor.

It is found in the cytoplasm. It catalyses the reaction (S)-4-amino-5-oxopentanoate = 5-aminolevulinate. The protein operates within porphyrin-containing compound metabolism; protoporphyrin-IX biosynthesis; 5-aminolevulinate from L-glutamyl-tRNA(Glu): step 2/2. It participates in porphyrin-containing compound metabolism; chlorophyll biosynthesis. In Prochlorococcus marinus (strain MIT 9515), this protein is Glutamate-1-semialdehyde 2,1-aminomutase.